Consider the following 321-residue polypeptide: Transcriptional activator protein Pur-alpha (321 aa).

The tract at residues 1–54 is disordered; sequence MADRDSGSEQGGAALGSGGSLGHPGSGSGSGGGGGGGGGGGGSGGGGGAPGGLQ. The residue at position 2 (alanine 2) is an N-acetylalanine. Gly residues predominate over residues 9 to 51; sequence EQGGAALGSGGSLGHPGSGSGSGGGGGGGGGGGGSGGGGGAPG. Serine 181 carries the post-translational modification Phosphoserine. A compositionally biased stretch (low complexity) spans 294–313; the sequence is LHQQQQQQQEETTAATLLLQ. The disordered stretch occupies residues 294–321; it reads LHQQQQQQQEETTAATLLLQGEEEGEED.

Belongs to the PUR DNA-binding protein family. As to quaternary structure, homodimer, heterodimer with PURB and heterotrimer with PURB and YBX1/Y-box protein 1. Interacts with FMR1; this interaction occurs in association with polyribosome.

Its subcellular location is the nucleus. Functionally, this is a probable transcription activator that specifically binds the purine-rich single strand of the PUR element located upstream of the c-Myc gene. May play a role in the initiation of DNA replication and in recombination. This chain is Transcriptional activator protein Pur-alpha (Pura), found in Mus musculus (Mouse).